A 274-amino-acid polypeptide reads, in one-letter code: Tyrosinase (274 aa).

The Cu cation site is built by H38, H54, H63, H190, H194, and H216.

It belongs to the tyrosinase family. Cu(2+) is required as a cofactor.

The enzyme catalyses 2 L-dopa + O2 = 2 L-dopaquinone + 2 H2O. It carries out the reaction L-tyrosine + O2 = L-dopaquinone + H2O. Its function is as follows. This is a copper-containing oxidase that functions in the formation of pigments such as melanins and other polyphenolic compounds. The sequence is that of Tyrosinase (melC2) from Streptomyces glaucescens.